Reading from the N-terminus, the 500-residue chain is Beta-glucosidase 30 (500 aa).

A signal peptide spans 1–25 (MGIRMGRRLLFTLFLGALFCNGVYA). Residue Gln46 coordinates a beta-D-glucoside. 2 N-linked (GlcNAc...) asparagine glycosylation sites follow: Asn63 and Asn114. Residues His149 and 194 to 195 (NE) contribute to the a beta-D-glucoside site. Glu195 serves as the catalytic Proton donor. Cys214 and Cys222 are oxidised to a cystine. Position 338 (Tyr338) interacts with a beta-D-glucoside. Residue Asn363 is glycosylated (N-linked (GlcNAc...) asparagine). A beta-D-glucoside is bound at residue Glu409. Residue Glu409 is the Nucleophile of the active site. N-linked (GlcNAc...) asparagine glycans are attached at residues Asn416 and Asn417. Residues Trp456, 463–464 (EW), and Phe472 each bind a beta-D-glucoside.

This sequence belongs to the glycosyl hydrolase 1 family.

The catalysed reaction is Hydrolysis of terminal, non-reducing beta-D-glucosyl residues with release of beta-D-glucose.. In Oryza sativa subsp. japonica (Rice), this protein is Beta-glucosidase 30 (BGLU30).